A 2971-amino-acid chain; its full sequence is Reticulocyte-binding protein homolog 1 (2971 aa).

Residues 1-20 form the signal peptide; it reads MQRWIFCNIVLHILIYLAEF. Topologically, residues 21 to 2897 are extracellular; it reads SHEQESYSSN…KKQKNGNHER (2877 aa). Residues 30–50 are disordered; sequence NEKIRKDYSDDNNYEPTPSYE. 7 N-linked (GlcNAc...) asparagine glycosylation sites follow: Asn70, Asn78, Asn87, Asn135, Asn286, Asn384, and Asn417. Positions 500–833 are erythrocyte binding domain (EBD); it reads LQIVQQKLLE…MQQGYNNLTN (334 aa). LRR repeat units follow at residues 528 to 553 and 607 to 633; these read YKNI…NIKD and LNNL…ILQK. Asn685 carries an N-linked (GlcNAc...) asparagine glycan. LRR repeat units lie at residues 736–758 and 785–808; these read IDTI…VYTD and QETL…LLKE. Residues Asn830, Asn892, Asn1000, and Asn1010 are each glycosylated (N-linked (GlcNAc...) asparagine). LRR repeat units follow at residues 993-1018 and 1356-1381; these read LKIL…TLND and LRNI…AHKE. Asn1425 carries N-linked (GlcNAc...) asparagine glycosylation. An LRR 7 repeat occupies 1466–1489; that stretch reads AKYMENIDTYKNNIEIISKQINPE. The N-linked (GlcNAc...) asparagine glycan is linked to Asn1496. LRR repeat units follow at residues 1512 to 1537, 1586 to 1609, and 1611 to 1636; these read YKQI…ELQN, SQNI…LEEE, and EQMK…AFIN. Asn1664, Asn1692, Asn1718, Asn1816, and Asn1844 each carry an N-linked (GlcNAc...) asparagine glycan. LRR repeat units lie at residues 1700–1723 and 1809–1834; these read LQEL…TIKY and LKLF…SIQN. An LRR 13 repeat occupies 1880–1903; it reads QNEIRNMNLEKNFMLDKSKKIDEE. Residues Asn1913 and Asn1918 are each glycosylated (N-linked (GlcNAc...) asparagine). The LRR 14 repeat unit spans residues 1944–1967; it reads KENIEKIKQEINTLSDVFKKPFFF. Residues Asn2054, Asn2207, Asn2289, Asn2300, Asn2338, and Asn2405 are each glycosylated (N-linked (GlcNAc...) asparagine). One copy of the LRR 15 repeat lies at 2523 to 2548; it reads IKDIDNVFIKIQNNKFEQIQKYIEII. 2 N-linked (GlcNAc...) asparagine glycosylation sites follow: Asn2598 and Asn2752. The LRR 16 repeat unit spans residues 2731 to 2754; that stretch reads ENIFDNIQLKKKDIDDIIININNT. 2 stretches are compositionally biased toward basic and acidic residues: residues 2773 to 2782 and 2795 to 2804; these read KVDEKSEINN and QKNKIKDHNL. 2 disordered regions span residues 2773–2825 and 2840–2862; these read KVDE…MKEQ and HHVH…LQEQ. An N-linked (GlcNAc...) asparagine glycan is attached at Asn2811. Over residues 2814-2825 the composition is skewed to basic and acidic residues; the sequence is EESHQNEQMKEQ. The chain crosses the membrane as a helical span at residues 2898 to 2918; sequence MYFASGIVVSILFLSSLGFVI. At 2919–2971 the chain is on the cytoplasmic side; it reads NSKNNKQEYDKEQEKQQQNDFVCDNNKMDDKSTQKYGRNQEEVMEISFDNDYI.

As to quaternary structure, may in part interact with AMA1 in the moving tight junction between the parasite and the erythrocyte membranes; the interaction may facilitate junction formation and active invasion. Proteolytically processed into multiple fragments following schizont rupture. In the mature schizont stage prior to merozoite release, full length RH1 is processed post-Golgi into a 240 kDa N-terminal form and a 120 kDa C-terminal form containing the transmembrane region. Both forms appear not to form a complex. However, they appear to remain in close proximity in late schizonts. Following merozoite invasion of host erythrocytes, the 240 kDa form is further processed into a 140 kDa form which may be involved in the disengagement of the ligand-receptor complex required during the invasion process. Also, the 120 kDa is further cleaved into a 110 kDa form and a transmembrane 9 kDa form probably by ROM4.

The protein resides in the cell membrane. It localises to the secreted. The protein localises to the cell junction. It is found in the tight junction. Its subcellular location is the cytoplasmic vesicle. The protein resides in the secretory vesicle. It localises to the rhoptry. Its function is as follows. During the asexual blood stage, binds to a sialic acid containing receptor on the surface of the host erythrocyte and thus is involved in merozoite invasion. Binds erythrocytes via a neuraminidase sensitive and trypsin-, chymotrypsin-resistant receptor. After merozoite attachment and reorientation, RH1 binding to its erythrocyte receptor triggers an increase in intracellular Ca(2+) within the parasite resulting in the release of microneme proteins such as EBA175 which in turn leads to the formation of the tight junction between parasite and host cell. The sequence is that of Reticulocyte-binding protein homolog 1 from Plasmodium falciparum (isolate 3D7).